The sequence spans 333 residues: Phosphate acyltransferase (333 aa).

Belongs to the PlsX family. As to quaternary structure, homodimer. Probably interacts with PlsY.

It is found in the cytoplasm. The enzyme catalyses a fatty acyl-[ACP] + phosphate = an acyl phosphate + holo-[ACP]. It participates in lipid metabolism; phospholipid metabolism. In terms of biological role, catalyzes the reversible formation of acyl-phosphate (acyl-PO(4)) from acyl-[acyl-carrier-protein] (acyl-ACP). This enzyme utilizes acyl-ACP as fatty acyl donor, but not acyl-CoA. This chain is Phosphate acyltransferase, found in Clostridium beijerinckii (strain ATCC 51743 / NCIMB 8052) (Clostridium acetobutylicum).